Reading from the N-terminus, the 76-residue chain is Acyl carrier protein (76 aa).

Positions methionine 1–lysine 76 constitute a Carrier domain. Serine 36 carries the post-translational modification O-(pantetheine 4'-phosphoryl)serine.

The protein belongs to the acyl carrier protein (ACP) family. In terms of processing, 4'-phosphopantetheine is transferred from CoA to a specific serine of apo-ACP by AcpS. This modification is essential for activity because fatty acids are bound in thioester linkage to the sulfhydryl of the prosthetic group.

It is found in the cytoplasm. It functions in the pathway lipid metabolism; fatty acid biosynthesis. Its function is as follows. Carrier of the growing fatty acid chain in fatty acid biosynthesis. The sequence is that of Acyl carrier protein from Helicobacter hepaticus (strain ATCC 51449 / 3B1).